The primary structure comprises 443 residues: Putative cytochrome bd menaquinol oxidase subunit I (443 aa).

Transmembrane regions (helical) follow at residues 19-39 (IIFA…ELIY), 60-80 (VLLG…ALLW), 93-113 (LPFQ…SIYV), 125-145 (IVAV…ITNV), 176-196 (FFIT…FIVA), 219-239 (ALLL…LNGH), 322-342 (LFNA…IGVV), 357-377 (LIIF…GWIF), and 405-425 (VLFL…VYVL). A heme b-binding site is contributed by histidine 182.

The protein belongs to the cytochrome ubiquinol oxidase subunit 1 family. Heme b serves as cofactor.

The protein localises to the cell membrane. In terms of biological role, may have a role in sporulation. Can compensate for the loss of cytochrome aa3. This chain is Putative cytochrome bd menaquinol oxidase subunit I (ythA), found in Bacillus subtilis (strain 168).